Reading from the N-terminus, the 157-residue chain is S-ribosylhomocysteine lyase (157 aa).

Positions 60, 64, and 127 each coordinate Fe cation.

Belongs to the LuxS family. In terms of assembly, homodimer. Requires Fe cation as cofactor.

The enzyme catalyses S-(5-deoxy-D-ribos-5-yl)-L-homocysteine = (S)-4,5-dihydroxypentane-2,3-dione + L-homocysteine. Involved in the synthesis of autoinducer 2 (AI-2) which is secreted by bacteria and is used to communicate both the cell density and the metabolic potential of the environment. The regulation of gene expression in response to changes in cell density is called quorum sensing. Catalyzes the transformation of S-ribosylhomocysteine (RHC) to homocysteine (HC) and 4,5-dihydroxy-2,3-pentadione (DPD). This is S-ribosylhomocysteine lyase from Helicobacter acinonychis (strain Sheeba).